A 461-amino-acid polypeptide reads, in one-letter code: Phenolic glucoside malonyltransferase 1 (461 aa).

His-167 acts as the Proton acceptor in catalysis. Residues 167-171 (HAAQD) carry the HXXXD motif motif. 281–282 (ST) is a binding site for malonyl-CoA. The active-site Proton acceptor is Asp-400. The short motif at 400–404 (DFGWG) is the DFGWG motif element.

It belongs to the plant acyltransferase family. Phenolic glucoside malonyltransferase subfamily. In terms of tissue distribution, expressed in all tissues. Most highly expressed in the abdomen and especially in the gut.

It catalyses the reaction a flavonol 3-O-beta-D-glucoside + malonyl-CoA = a flavonol 3-O-(6-O-malonyl-beta-D-glucoside) + CoA. The enzyme catalyses kaempferol 3-O-beta-D-glucoside + malonyl-CoA = kaempferol 3-O-(6-O-malonyl-beta-D-glucoside) + CoA. The catalysed reaction is quercetin 3-O-beta-D-glucoside + malonyl-CoA = quercetin 3-O-(6-O-malonyl-beta-D-glucoside) + CoA. It carries out the reaction a flavonol 7-O-beta-D-glucoside + malonyl-CoA = a flavonol 7-O-(6-O-malonyl-beta-D-glucoside) + CoA. It catalyses the reaction (2S)-naringenin 7-O-beta-D-glucoside + malonyl-CoA = (2S)-naringenin 7-O-(6-O-malonyl-beta-D-glucoside) + CoA. The enzyme catalyses kaempferol 7-O-beta-D-glucoside + malonyl-CoA = kaempferol 7-O-(6-O-malonyl-beta-D-glucoside) + CoA. The catalysed reaction is apigenin 7-O-beta-D-glucoside + malonyl-CoA = apigenin 7-O-(6-O-malonyl-beta-D-glucoside) + CoA. It carries out the reaction rhaponticin + malonyl-CoA = 6-O-malonyl-rhaponticin + CoA. In terms of biological role, phenolic glucoside malonyltransferase that neutralizes phenolic glycosides in host plants. Catalyzes the transfer of a malonyl group from malonyl-CoA to the phenolic glycosides, leading to their detoxification. Phenolic glycosides, which are among the most abundant plant secondary metabolites, act as plant defense compounds: they strongly affect growth, development and behavior of insect herbivores. Has malonyltransferase activity against flavonoids kaempferol 3-O-glucoside, kaempferol 7-O-glucoside, isoquercetin (quercetin 3-O-beta-D-glucopyranoside), apigetrin (apigenin 7-O-beta-D-glucoside) and prunin (naringenin 7-O-beta-D-glucoside). Also has activity toward non-flavonoid rhaponticin, but with lower efficiency. The chain is Phenolic glucoside malonyltransferase 1 from Bemisia tabaci (Sweetpotato whitefly).